Here is a 759-residue protein sequence, read N- to C-terminus: MMAALYPSTDLSGVSSSSLPSSPSSSSPNEVMALKDVREVKEENTLNEKLFLLACDKGDYYMVKKILEENSSGDLNINCVDVLGRNAVTITIENESLDILQLLLDYGCQKLMERIQNPEYSTTMDVAPVILAAHRNNYEILTMLLKQDVALPKPHAVGCECTLCSAKNKKDSLRHSRFRLDIYRCLASPALIMLTEEDPILRAFELSADLKELSLVEVEFWNDYEELARQCKMFAKDLLAQARNSRELEVILNHTSSDEPLDKRGLLEERMNLSRLKLAIKYNQKEFVSQSNCQQFLNTVWFGQMSGYRRKPTCKKIMTVLTVGIFWPVLSLCYLIAPKSQFGRIIHTPFMKFIIHGASYFTFLLLLNLYSLVYNEDKKNTMGPALERIDYLLILWIIGMIWSDIKRLWYEGLEDFLEESRNQLSFVMNSLYLATFALKVVAHNKFHDFADRKDWDAFHPTLVAEGLFAFANVLSYLRLFFMYTTSSILGPLQISMGQMLQDFGKFLGMFLLVLFSFTIGLTQLYDKGYTSKEQKDCVGIFCEQQSNDTFHSFIGTCFALFWYIFSLAHVAIFVTRFSYGEELQSFVGAVIVGTYNVVVVIVLTKLLVAMLHKSFQLIANHEDKEWKFARAKLWLSYFDDKCTLPPPFNIIPSPKTICYMISSLSKWVCSHTSKGKVRRQNSLKEWRNLKQKRDENYQKVMCCLVHRYLTSMRQKMQSTDQATVENLNELRQDLSKFRNEIRDLLGFRTSKYAMFYPKN.

The tract at residues 1 to 30 (MMAALYPSTDLSGVSSSSLPSSPSSSSPNE) is disordered. At 1-311 (MMAALYPSTD…FGQMSGYRRK (311 aa)) the chain is on the cytoplasmic side. Residues 15–28 (SSSSLPSSPSSSSP) show a composition bias toward low complexity. ANK repeat units follow at residues 46–75 (LNEKLFLLACDKGDYYMVKKILEENSSGDL), 83–109 (LGRNAVTITIENESLDILQLLLDYGCQ), and 124–146 (MDVAPVILAAHRNNYEILTMLLK). Residues His155, Cys159, Cys161, and Cys164 each contribute to the Zn(2+) site. Residues 312–345 (PTCKKIMTVLTVGIFWPVLSLCYLIAPKSQFGRI) constitute an intramembrane region (discontinuously helical). At 346-352 (IHTPFMK) the chain is on the cytoplasmic side. The helical transmembrane segment at 353-370 (FIIHGASYFTFLLLLNLY) threads the bilayer. At 371–388 (SLVYNEDKKNTMGPALER) the chain is on the extracellular side. Residues 389–405 (IDYLLILWIIGMIWSDI) form a helical membrane-spanning segment. Over 406-421 (KRLWYEGLEDFLEESR) the chain is Cytoplasmic. A helical membrane pass occupies residues 422–441 (NQLSFVMNSLYLATFALKVV). At 442 to 462 (AHNKFHDFADRKDWDAFHPTL) the chain is on the extracellular side. A helical membrane pass occupies residues 463–483 (VAEGLFAFANVLSYLRLFFMY). Residues 484-502 (TTSSILGPLQISMGQMLQD) are Cytoplasmic-facing. A helical transmembrane segment spans residues 503 to 524 (FGKFLGMFLLVLFSFTIGLTQL). Over 525 to 589 (YDKGYTSKEQ…GEELQSFVGA (65 aa)) the chain is Extracellular. A disulfide bond links Cys537 and Cys542. The helical transmembrane segment at 590-610 (VIVGTYNVVVVIVLTKLLVAM) threads the bilayer. Residues 611-759 (LHKSFQLIAN…SKYAMFYPKN (149 aa)) lie on the Cytoplasmic side of the membrane.

It belongs to the transient receptor (TC 1.A.4) family. STrpC subfamily. TRPC1 sub-subfamily. As to quaternary structure, heterotetramer with TRPC4 and/or TRPC5. Forms a heteromeric ion channel with TRPC4, with a 1:3 TRPC1:TRPC4 stoichiometry. Unlike other TRP channel proteins, does not form a homomeric channel. Interacts with TRPC4AP. Interacts with ITPR3. Interacts with MX1 and RNF24. Interacts with FKBP4. Interacts with PLSCR1. Interacts with PKD2L2. Forms a heterotetramer with PKD2 with a 2:2 stoichiometry; has distinct channel properties separate from PKD2 or TRPC1 homomers alone. Post-translationally, activation of PRKCA induces phosphorylation of TRPC1 and subsequent Ca2+ entry into cells. In terms of tissue distribution, expressed in brain, hippocampus, amygdala, Purkinje cells and single neurons in the cortex and striatum.

It localises to the cell membrane. It carries out the reaction Ca(2+)(in) = Ca(2+)(out). It catalyses the reaction Na(+)(in) = Na(+)(out). The enzyme catalyses Li(+)(in) = Li(+)(out). The catalysed reaction is Cs(+)(in) = Cs(+)(out). Its activity is regulated as follows. May be operated by a phosphatidylinositol second messenger system activated by receptor tyrosine kinases or G-protein coupled receptors. Also activated by intracellular calcium store depletion. Functionally, forms a receptor-activated non-selective calcium permeant cation channel. Forms a heteromeric ion channel with TRPC4 or TRPC5 that has reduced calcium permeability compared to the homomeric TRPC4 or TRPC5 channel. Also permeable to monovalent ions including sodium, lithium and cesium ions. The chain is Short transient receptor potential channel 1 (Trpc1) from Rattus norvegicus (Rat).